We begin with the raw amino-acid sequence, 280 residues long: Hydroxyethylthiazole kinase (280 aa).

Residue Met50 coordinates substrate. The ATP site is built by Lys125 and Thr178. Gly205 contacts substrate.

Belongs to the Thz kinase family. Requires Mg(2+) as cofactor.

The catalysed reaction is 5-(2-hydroxyethyl)-4-methylthiazole + ATP = 4-methyl-5-(2-phosphooxyethyl)-thiazole + ADP + H(+). Its pathway is cofactor biosynthesis; thiamine diphosphate biosynthesis; 4-methyl-5-(2-phosphoethyl)-thiazole from 5-(2-hydroxyethyl)-4-methylthiazole: step 1/1. Functionally, catalyzes the phosphorylation of the hydroxyl group of 4-methyl-5-beta-hydroxyethylthiazole (THZ). This is Hydroxyethylthiazole kinase from Lacticaseibacillus paracasei (strain ATCC 334 / BCRC 17002 / CCUG 31169 / CIP 107868 / KCTC 3260 / NRRL B-441) (Lactobacillus paracasei).